A 98-amino-acid polypeptide reads, in one-letter code: N(2)-fixation sustaining protein CowN (98 aa).

Belongs to the CowN family.

Functionally, is required to sustain N(2)-dependent growth in the presence of low levels of carbon monoxide (CO). Probably acts by protecting the N(2) fixation ability of the nitrogenase complex, which is inactivated in the presence of CO. This chain is N(2)-fixation sustaining protein CowN, found in Dechloromonas aromatica (strain RCB).